A 425-amino-acid polypeptide reads, in one-letter code: UDP-N-acetylglucosamine 1-carboxyvinyltransferase (425 aa).

22–23 provides a ligand contact to phosphoenolpyruvate; it reads KN. Arginine 93 lines the UDP-N-acetyl-alpha-D-glucosamine pocket. Aspartate 117 acts as the Proton donor in catalysis. UDP-N-acetyl-alpha-D-glucosamine contacts are provided by aspartate 312 and methionine 334.

This sequence belongs to the EPSP synthase family. MurA subfamily.

The protein resides in the cytoplasm. The catalysed reaction is phosphoenolpyruvate + UDP-N-acetyl-alpha-D-glucosamine = UDP-N-acetyl-3-O-(1-carboxyvinyl)-alpha-D-glucosamine + phosphate. It functions in the pathway cell wall biogenesis; peptidoglycan biosynthesis. In terms of biological role, cell wall formation. Adds enolpyruvyl to UDP-N-acetylglucosamine. The protein is UDP-N-acetylglucosamine 1-carboxyvinyltransferase of Treponema pallidum (strain Nichols).